Reading from the N-terminus, the 437-residue chain is Probable peptidoglycan-N-acetylglucosamine deacetylase ARB_03699 (437 aa).

Positions methionine 1–alanine 20 are cleaved as a signal peptide. The interval serine 47 to proline 132 is disordered. A glycan (N-linked (GlcNAc...) asparagine) is linked at asparagine 99. Positions glycine 149–valine 334 constitute a NodB homology domain. Aspartate 156 (proton acceptor) is an active-site residue. 3 residues coordinate Zn(2+): aspartate 157, histidine 209, and histidine 213. Tyrosine 251 contributes to the substrate binding site. Histidine 308 serves as the catalytic Proton donor. Low complexity predominate over residues threonine 350 to serine 370. The segment at threonine 350 to alanine 384 is disordered. The LysM domain occupies lysine 389 to valine 435.

Requires Zn(2+) as cofactor. The cofactor is Co(2+).

Its subcellular location is the secreted. It catalyses the reaction peptidoglycan-N-acetyl-D-glucosamine + H2O = peptidoglycan-D-glucosamine + acetate.. Its function is as follows. Catalyzes the deacetylation of N-acetylglucosamine (GlcNAc) residues in peptidoglycan. This is Probable peptidoglycan-N-acetylglucosamine deacetylase ARB_03699 from Arthroderma benhamiae (strain ATCC MYA-4681 / CBS 112371) (Trichophyton mentagrophytes).